The chain runs to 414 residues: MNITWNWYEQLESAHARAFTVAKATKAEVLDTIRWATEQAIANGTGEREYIKKLEPMLKELGWWGKAKDENGNEVQLGSPRRLRTILRTNKITAYHAARYAQQMENVDEQPYWRYVAVNDSRTRASHLALHGKIYRADDPIWQTMYPPNDWGCRCRVEALSEYAVQSRGLKISSSDGEMEMEEAVVGIDKDTGEEIRTTVSKIKTDQGEMKVGAGWNYNVGSAAFGTDVAVLRKLQQVKNRELRQQTIQAINNSEARHKAFADWVLANLGKRGASARYMSAGLVTTEIAEAVTEITQGGKNAELVLVMSEKRLAHANSDKHHEGGVGLTAEEYASISRIVANPSLVLWDTLEGHNNLIYINQERTIQVIVDVPNKHSIKPKEKVDAIINAYKVDMNNVKRQLSGGNYVLLKGKL.

The protein to phage Mu protein F.

Its function is as follows. Involved in virion morphogenesis. The protein is Mu-like prophage FluMu F protein of Haemophilus influenzae (strain ATCC 51907 / DSM 11121 / KW20 / Rd).